The sequence spans 282 residues: uncharacterized protein (282 aa).

The helical transmembrane segment at 22 to 42 (YLFTLGSFVTMFFVLCISPVF) threads the bilayer.

It is found in the cell membrane. This is an uncharacterized protein from Bacillus anthracis.